The primary structure comprises 325 residues: Biotin synthase (325 aa).

The Radical SAM core domain maps to 42–270 (YKVQLASLLS…QSRVRLSAGR (229 aa)). [4Fe-4S] cluster is bound by residues Cys57, Cys61, and Cys64. The [2Fe-2S] cluster site is built by Cys101, Cys133, Cys193, and Arg265.

The protein belongs to the radical SAM superfamily. Biotin synthase family. As to quaternary structure, homodimer. It depends on [4Fe-4S] cluster as a cofactor. [2Fe-2S] cluster is required as a cofactor.

It carries out the reaction (4R,5S)-dethiobiotin + (sulfur carrier)-SH + 2 reduced [2Fe-2S]-[ferredoxin] + 2 S-adenosyl-L-methionine = (sulfur carrier)-H + biotin + 2 5'-deoxyadenosine + 2 L-methionine + 2 oxidized [2Fe-2S]-[ferredoxin]. Its pathway is cofactor biosynthesis; biotin biosynthesis; biotin from 7,8-diaminononanoate: step 2/2. In terms of biological role, catalyzes the conversion of dethiobiotin (DTB) to biotin by the insertion of a sulfur atom into dethiobiotin via a radical-based mechanism. This chain is Biotin synthase, found in Synechococcus sp. (strain WH7803).